The primary structure comprises 90 residues: Trp-8 progonadoliberin (90 aa).

The first 24 residues, 1-24 (MSRHVTVVLLLAVVLLLSSHMSHG), serve as a signal peptide directing secretion. Gln-25 carries the pyrrolidone carboxylic acid modification. Position 34 is a glycine amide (Gly-34).

It belongs to the GnRH family. As to expression, expressed in forebrain but not in testis, ovary, kidney and liver.

It is found in the secreted. Its function is as follows. Stimulates the secretion of gonadotropins. The sequence is that of Trp-8 progonadoliberin from Rana dybowskii (Dybovsky's frog).